The sequence spans 417 residues: Sulfite reductase, dissimilatory-type subunit alpha (417 aa).

8 residues coordinate [4Fe-4S] cluster: cysteine 170, cysteine 176, cysteine 214, cysteine 218, cysteine 264, cysteine 284, cysteine 287, and cysteine 290. Cysteine 218 is a binding site for siroheme.

[4Fe-4S] cluster serves as cofactor. It depends on siroheme as a cofactor.

The enzyme catalyses [DsrC protein]-trisulfide + NAD(+) + 3 H2O = [DsrC protein]-dithiol + sulfite + NADH + 3 H(+). In terms of biological role, catalyzes the reduction of sulfite to sulfide. This is the terminal oxidation reaction in sulfate respiration. The chain is Sulfite reductase, dissimilatory-type subunit alpha (dsrA) from Allochromatium vinosum (strain ATCC 17899 / DSM 180 / NBRC 103801 / NCIMB 10441 / D) (Chromatium vinosum).